Reading from the N-terminus, the 457-residue chain is D-hydantoinase (457 aa).

H57 and H59 together coordinate Zn(2+). S69 carries the post-translational modification Phosphoserine. K148 is a binding site for Zn(2+). K148 is modified (N6-carboxylysine). Y153 lines the substrate pocket. Residues H181 and H237 each contribute to the Zn(2+) site. T286 is a binding site for substrate. D313 serves as a coordination point for Zn(2+). N335 is a substrate binding site.

This sequence belongs to the metallo-dependent hydrolases superfamily. Hydantoinase/dihydropyrimidinase family. As to quaternary structure, homotetramer. Requires Zn(2+) as cofactor. In terms of processing, carboxylation allows a single lysine to coordinate two zinc ions.

In terms of biological role, catalyzes the stereospecific hydrolysis of the cyclic amide bond of D-hydantoin derivatives. This Rhizobium radiobacter (Agrobacterium tumefaciens) protein is D-hydantoinase (hyuA).